Reading from the N-terminus, the 231-residue chain is Sporulation protein RMD6 (231 aa).

The protein localises to the peroxisome. In terms of biological role, required for sporulation. Required for meiotic nuclear division. This chain is Sporulation protein RMD6 (RMD6), found in Saccharomyces cerevisiae (strain ATCC 204508 / S288c) (Baker's yeast).